The chain runs to 357 residues: Alanine racemase (357 aa).

The Proton acceptor; specific for D-alanine role is filled by Lys34. An N6-(pyridoxal phosphate)lysine modification is found at Lys34. Arg130 contacts substrate. Tyr253 functions as the Proton acceptor; specific for L-alanine in the catalytic mechanism. Met301 provides a ligand contact to substrate.

It belongs to the alanine racemase family. Requires pyridoxal 5'-phosphate as cofactor.

The catalysed reaction is L-alanine = D-alanine. It functions in the pathway amino-acid biosynthesis; D-alanine biosynthesis; D-alanine from L-alanine: step 1/1. Catalyzes the interconversion of L-alanine and D-alanine. May also act on other amino acids. The sequence is that of Alanine racemase (alr) from Mannheimia succiniciproducens (strain KCTC 0769BP / MBEL55E).